Consider the following 438-residue polypeptide: Rhomboid-related protein 1 (438 aa).

Residues 1–62 are disordered; it reads MGRVEDGGTT…PSQPGPALWS (62 aa). Over residues 8 to 17 the composition is skewed to acidic residues; it reads GTTEELEDWD. The next 7 membrane-spanning stretches (helical) occupy residues 196–216, 262–282, 284–304, 308–328, 340–359, 372–392, and 405–425; these read PPVF…CYGA, GFNA…HGLL, ISLL…ITDM, VVGG…NVVM, LRMV…AVWL, PSFM…LTIL, and WWVV…WNVF. The Nucleophile role is filled by Ser312. The active site involves His377.

It belongs to the peptidase S54 family. As to expression, detected in heart, brain, skeletal muscle and kidney.

The protein localises to the membrane. It carries out the reaction Cleaves type-1 transmembrane domains using a catalytic dyad composed of serine and histidine that are contributed by different transmembrane domains.. In terms of biological role, may be involved in regulated intramembrane proteolysis and the subsequent release of functional polypeptides from their membrane anchors. The polypeptide is Rhomboid-related protein 1 (RHBDL1) (Homo sapiens (Human)).